We begin with the raw amino-acid sequence, 586 residues long: CTP synthase 2 (586 aa).

Residues 300–554 enclose the Glutamine amidotransferase type-1 domain; that stretch reads SIALVGKYTK…LAATGNLNAH (255 aa). Residues Cys399, His526, and Glu528 each act as for GATase activity in the active site. A phosphoserine mark is found at Ser568, Ser571, and Ser574.

This sequence belongs to the CTP synthase family.

It carries out the reaction UTP + L-glutamine + ATP + H2O = CTP + L-glutamate + ADP + phosphate + 2 H(+). It functions in the pathway pyrimidine metabolism; CTP biosynthesis via de novo pathway; CTP from UDP: step 2/2. Functionally, catalyzes the ATP-dependent amination of UTP to CTP with either L-glutamine or ammonia as the source of nitrogen. Constitutes the rate-limiting enzyme in the synthesis of cytosine nucleotides. This chain is CTP synthase 2 (Ctps2), found in Mus musculus (Mouse).